Consider the following 47-residue polypeptide: Bifunctional chitinase/lysozyme (47 aa).

In terms of domain architecture, GH18 spans 1–47 (GGIAIYWGQNGNEGTLTQTCNTGKYSYVNIAFLNKFGNGQTPEINLA).

It belongs to the glycosyl hydrolase 18 family. Chitinase class II subfamily.

The protein resides in the secreted. The protein localises to the extracellular space. The enzyme catalyses Random endo-hydrolysis of N-acetyl-beta-D-glucosaminide (1-&gt;4)-beta-linkages in chitin and chitodextrins.. The catalysed reaction is Hydrolysis of (1-&gt;4)-beta-linkages between N-acetylmuramic acid and N-acetyl-D-glucosamine residues in a peptidoglycan and between N-acetyl-D-glucosamine residues in chitodextrins.. Its function is as follows. Bifunctional enzyme with lysozyme/chitinase activity. The chain is Bifunctional chitinase/lysozyme from Parthenocissus quinquefolia (Virginia creeper).